A 197-amino-acid polypeptide reads, in one-letter code: MIEFIRGYVDYVCPEYVVIENNGVGYQIFTPNPFSFQMNKQQQIVVYTYQYVREDVLALYGFHTRQERMLFAKLLQVSGIGPKGALAILAAGQLEQLVEAIEAENDQFLCKFPGVGKKTARQMILDLKGKLQAIVPDAFPNLFTEPLEETNALSEAIEALKALGYADKEIQKVVPMLRQERLSTEGYIKLALQKLLK.

Residues 1 to 63 (MIEFIRGYVD…EDVLALYGFH (63 aa)) are domain I. A domain II region spans residues 64 to 142 (TRQERMLFAK…AIVPDAFPNL (79 aa)). The segment at 143–149 (FTEPLEE) is flexible linker. Residues 149–197 (ETNALSEAIEALKALGYADKEIQKVVPMLRQERLSTEGYIKLALQKLLK) are domain III.

It belongs to the RuvA family. In terms of assembly, homotetramer. Forms an RuvA(8)-RuvB(12)-Holliday junction (HJ) complex. HJ DNA is sandwiched between 2 RuvA tetramers; dsDNA enters through RuvA and exits via RuvB. An RuvB hexamer assembles on each DNA strand where it exits the tetramer. Each RuvB hexamer is contacted by two RuvA subunits (via domain III) on 2 adjacent RuvB subunits; this complex drives branch migration. In the full resolvosome a probable DNA-RuvA(4)-RuvB(12)-RuvC(2) complex forms which resolves the HJ.

Its subcellular location is the cytoplasm. In terms of biological role, the RuvA-RuvB-RuvC complex processes Holliday junction (HJ) DNA during genetic recombination and DNA repair, while the RuvA-RuvB complex plays an important role in the rescue of blocked DNA replication forks via replication fork reversal (RFR). RuvA specifically binds to HJ cruciform DNA, conferring on it an open structure. The RuvB hexamer acts as an ATP-dependent pump, pulling dsDNA into and through the RuvAB complex. HJ branch migration allows RuvC to scan DNA until it finds its consensus sequence, where it cleaves and resolves the cruciform DNA. In Anoxybacillus flavithermus (strain DSM 21510 / WK1), this protein is Holliday junction branch migration complex subunit RuvA.